The chain runs to 294 residues: Foldase protein PrsA 1 (294 aa).

Residues 1-21 form the signal peptide; the sequence is MTKLKKVMISVIAATLLLLAG. Residue Cys22 is the site of N-palmitoyl cysteine attachment. Cys22 carries S-diacylglycerol cysteine lipidation. The 92-residue stretch at 135-226 folds into the PpiC domain; sequence EPDITVRHIL…YGYHLIQLVK (92 aa).

The protein belongs to the PrsA family.

The protein localises to the cell membrane. The enzyme catalyses [protein]-peptidylproline (omega=180) = [protein]-peptidylproline (omega=0). Plays a major role in protein secretion by helping the post-translocational extracellular folding of several secreted proteins. The sequence is that of Foldase protein PrsA 1 from Listeria monocytogenes serotype 4b (strain F2365).